A 1042-amino-acid polypeptide reads, in one-letter code: Disintegrin and metalloproteinase domain-containing protein unc-71 (1042 aa).

Positions 1-23 are cleaved as a signal peptide; that stretch reads MICASKITMLGLLVMCTLGGVLG. Residues 24-746 lie on the Extracellular side of the membrane; sequence KVDIRQTTAN…NIGTTLETAT (723 aa). Residues Asn103 and Asn155 are each glycosylated (N-linked (GlcNAc...) asparagine). The Peptidase M12B domain occupies 227–431; that stretch reads KYVEVALIAD…GNIQCLLNKP (205 aa). Disulfide bonds link Cys338-Cys426, Cys378-Cys410, Cys380-Cys386, and Cys496-Cys516. Positions 437 to 524 constitute a Disintegrin domain; that stretch reads LRECGNGVVD…DCPPDGHLID (88 aa). Residue Asn538 is glycosylated (N-linked (GlcNAc...) asparagine). The 38-residue stretch at 662-699 folds into the EGF-like domain; that stretch reads SATACPTNNLALLCSGHGHCTTTARCVCFNGWSGVACD. Cystine bridges form between Cys666–Cys681, Cys675–Cys687, and Cys689–Cys698. Asn703 is a glycosylation site (N-linked (GlcNAc...) asparagine). Residues 747–767 form a helical membrane-spanning segment; that stretch reads LFAILLGFGVFLLLCLVCLML. Residues 768–1042 lie on the Cytoplasmic side of the membrane; sequence CYRRRSVVEI…KLEMTNSMHN (275 aa). Disordered stretches follow at residues 779–809, 825–850, and 980–1028; these read KPSD…RKRK, DERD…RRNG, and HDVG…PSLF. The span at 825-836 shows a compositional bias: basic and acidic residues; it reads DERDSTSLRSRD. The span at 1002–1027 shows a compositional bias: polar residues; that stretch reads DSPTLVNGASSSSTSNNYNFRQSPSL.

It localises to the cell membrane. Functionally, involved in the migration of sex myoblasts (progenitors of egg-laying muscles), Q neuroblasts and BDU interneurons during development. Involved in axon branching and guidance of neurons including GABAergic type D motor neurons. Promotes sex myoblast migration and positioning independently of gonad attraction cues. May act downstream of mig-13 in order to promote the guidance, migration and positioning of Q neuroblasts and their descendants along the anteroposterior body axis. Required for coordinated movements. The sequence is that of Disintegrin and metalloproteinase domain-containing protein unc-71 from Caenorhabditis elegans.